The chain runs to 374 residues: All-trans-retinol dehydrogenase [NAD(+)] ADH7 (374 aa).

M1 is subject to N-acetylmethionine. Residues C47, H68, C98, C101, C104, C112, and C174 each coordinate Zn(2+). NAD(+) is bound by residues 199 to 204, D223, K228, 292 to 294, and R369; these read GLGGVG and VGA.

It belongs to the zinc-containing alcohol dehydrogenase family. Class-IV subfamily. Homodimer. Zn(2+) serves as cofactor. Preferentially expressed in stomach.

It localises to the cytoplasm. It carries out the reaction a primary alcohol + NAD(+) = an aldehyde + NADH + H(+). The catalysed reaction is 10-hydroxydecanoate + NAD(+) = 10-oxodecanoate + NADH + H(+). The enzyme catalyses all-trans-retinol + NAD(+) = all-trans-retinal + NADH + H(+). It catalyses the reaction 9-cis-retinol + NAD(+) = 9-cis-retinal + NADH + H(+). It carries out the reaction all-trans-3,4-didehydroretinol + NAD(+) = all-trans-3,4-didehydroretinal + NADH + H(+). The catalysed reaction is all-trans-4-hydroxyretinol + NAD(+) = all-trans-4-hydroxyretinal + NADH + H(+). The enzyme catalyses all-trans-4-oxoretinol + NAD(+) = all-trans-4-oxoretinal + NADH + H(+). It catalyses the reaction 12-hydroxydodecanoate + NAD(+) = 12-oxododecanoate + NADH + H(+). It carries out the reaction 16-hydroxyhexadecanoate + NAD(+) = 16-oxohexadecanoate + NADH + H(+). The catalysed reaction is hexan-1-ol + NAD(+) = hexanal + NADH + H(+). The enzyme catalyses (E)-hex-2-en-1-ol + NAD(+) = (E)-hex-2-enal + NADH + H(+). It catalyses the reaction (E)-4-hydroxynon-2-en-1-ol + NAD(+) = (E)-4-hydroxynon-2-enal + NADH + H(+). Retinol oxidation is inhibited by the detergent Tween 80. Ethanol inhibits both all-trans-retinol and 9-cis-retinol oxidation. 13-cis-retinol is an effective competitive inhibitor of the 9-cis-retinol oxidation. All-trans-retinoic acid is a powerful inhibitor of all-trans-retinol oxidation. 13-cis-retinoic acid is a powerful inhibitor of all-trans-retinol oxidation. Cimetidine and ranitidine inhibited ethanol oxidation. Its function is as follows. Catalyzes the NAD-dependent oxidation of all-trans-retinol, alcohol, aldehyde and omega-hydroxy fatty acids and their derivatives. Oxidizes preferentially all trans-retinol, all-trans-4-hydroxyretinol, 9-cis-retinol, 2-hexenol, and long chain omega-hydroxy fatty acids such as juniperic acid. In vitro can also catalyze the NADH-dependent reduction of all-trans-retinal and aldehydes and their derivatives. Reduces preferentially all trans-retinal, all-trans-4-oxoretinal and hexanal. Catalyzes in the oxidative direction with higher efficiency. Therefore may participate in retinoid metabolism, fatty acid omega-oxidation, and elimination of cytotoxic aldehydes produced by lipid peroxidation. This chain is All-trans-retinol dehydrogenase [NAD(+)] ADH7 (Adh7), found in Rattus norvegicus (Rat).